The primary structure comprises 227 residues: Ribosomal RNA small subunit methyltransferase G (227 aa).

Residues Gly69, Phe74, 119 to 120 (VE), and Arg134 contribute to the S-adenosyl-L-methionine site.

This sequence belongs to the methyltransferase superfamily. RNA methyltransferase RsmG family.

It localises to the cytoplasm. Functionally, specifically methylates the N7 position of a guanine in 16S rRNA. This Mycoplasmopsis pulmonis (strain UAB CTIP) (Mycoplasma pulmonis) protein is Ribosomal RNA small subunit methyltransferase G.